The chain runs to 217 residues: Deoxyribose-phosphate aldolase (217 aa).

The active-site Proton donor/acceptor is the aspartate 90. Lysine 152 functions as the Schiff-base intermediate with acetaldehyde in the catalytic mechanism. Lysine 181 functions as the Proton donor/acceptor in the catalytic mechanism.

Belongs to the DeoC/FbaB aldolase family. DeoC type 1 subfamily.

The protein localises to the cytoplasm. It catalyses the reaction 2-deoxy-D-ribose 5-phosphate = D-glyceraldehyde 3-phosphate + acetaldehyde. Its pathway is carbohydrate degradation; 2-deoxy-D-ribose 1-phosphate degradation; D-glyceraldehyde 3-phosphate and acetaldehyde from 2-deoxy-alpha-D-ribose 1-phosphate: step 2/2. In terms of biological role, catalyzes a reversible aldol reaction between acetaldehyde and D-glyceraldehyde 3-phosphate to generate 2-deoxy-D-ribose 5-phosphate. In Metamycoplasma hominis (Mycoplasma hominis), this protein is Deoxyribose-phosphate aldolase.